A 576-amino-acid chain; its full sequence is Probable lysosomal cobalamin transporter (576 aa).

10 helical membrane-spanning segments follow: residues 8–28 (LIWA…SVFI), 40–60 (VVTF…LLLP), 98–118 (YLLY…VYFW), 145–165 (TISF…VPVA), 188–208 (VLTF…ILYT), 312–332 (LLGG…MLLT), 347–367 (GYIL…VQSA), 377–397 (LTVV…TIGI), 419–439 (LTTA…PMLV), and 503–523 (FFGT…LLVL). Residues 549 to 576 (RLLTSSARGVGDTYQSVGGRNNFSTRAG) are disordered. Polar residues predominate over residues 561–576 (TYQSVGGRNNFSTRAG). Asn-570 carries N-linked (GlcNAc...) asparagine glycosylation.

Belongs to the LIMR family. LMBRD1 subfamily.

The protein localises to the lysosome membrane. Its function is as follows. Probable lysosomal cobalamin transporter. Required to export cobalamin from lysosomes allowing its conversion to cofactors. The polypeptide is Probable lysosomal cobalamin transporter (Aspergillus niger (strain ATCC MYA-4892 / CBS 513.88 / FGSC A1513)).